Consider the following 455-residue polypeptide: Adenylyltransferase and sulfurtransferase MOCS3 (455 aa).

ATP contacts are provided by residues G90, D111, 118–122 (SNLAR), K135, and 179–180 (DN). The tract at residues 156 to 236 (AQALTPATAL…RPPPAETVTS (81 aa)) is interaction with NFS1. The Zn(2+) site is built by C220 and C223. C237 (glycyl thioester intermediate; for adenylyltransferase activity) is an active-site residue. Residues C295 and C298 each contribute to the Zn(2+) site. Cysteines 314 and 322 form a disulfide. Positions 345-453 (SRSPHLLLDV…WAAKIDGTFP (109 aa)) constitute a Rhodanese domain. C410 functions as the Cysteine persulfide intermediate; for sulfurtransferase activity in the catalytic mechanism. The residue at position 410 (C410) is a Cysteine persulfide.

It in the N-terminal section; belongs to the HesA/MoeB/ThiF family. UBA4 subfamily. In terms of assembly, interacts with NFS1. Zn(2+) is required as a cofactor.

Its subcellular location is the cytoplasm. The protein localises to the cytosol. The catalysed reaction is [molybdopterin-synthase sulfur-carrier protein]-C-terminal Gly-Gly + ATP + H(+) = [molybdopterin-synthase sulfur-carrier protein]-C-terminal Gly-Gly-AMP + diphosphate. The enzyme catalyses [molybdopterin-synthase sulfur-carrier protein]-C-terminal Gly-Gly-AMP + S-sulfanyl-L-cysteinyl-[cysteine desulfurase] + AH2 = [molybdopterin-synthase sulfur-carrier protein]-C-terminal-Gly-aminoethanethioate + L-cysteinyl-[cysteine desulfurase] + A + AMP + 2 H(+). It participates in tRNA modification; 5-methoxycarbonylmethyl-2-thiouridine-tRNA biosynthesis. The protein operates within cofactor biosynthesis; molybdopterin biosynthesis. Plays a central role in 2-thiolation of mcm(5)S(2)U at tRNA wobble positions of cytosolic tRNA(Lys), tRNA(Glu) and tRNA(Gln). Also essential during biosynthesis of the molybdenum cofactor. Acts by mediating the C-terminal thiocarboxylation of sulfur carriers URM1 and MOCS2A. Its N-terminus first activates URM1 and MOCS2A as acyl-adenylates (-COAMP), then the persulfide sulfur on the catalytic cysteine is transferred to URM1 and MOCS2A to form thiocarboxylation (-COSH) of their C-terminus. The reaction probably involves hydrogen sulfide that is generated from the persulfide intermediate and that acts as a nucleophile towards URM1 and MOCS2A. Subsequently, a transient disulfide bond is formed. Does not use thiosulfate as sulfur donor; NFS1 acting as a sulfur donor for thiocarboxylation reactions. This is Adenylyltransferase and sulfurtransferase MOCS3 from Bos taurus (Bovine).